Here is a 94-residue protein sequence, read N- to C-terminus: Small ribosomal subunit protein bS6 (94 aa).

Belongs to the bacterial ribosomal protein bS6 family.

Functionally, binds together with bS18 to 16S ribosomal RNA. The sequence is that of Small ribosomal subunit protein bS6 from Clostridium botulinum (strain Loch Maree / Type A3).